A 72-amino-acid chain; its full sequence is Large ribosomal subunit protein uL30 (72 aa).

The protein belongs to the universal ribosomal protein uL30 family. In terms of assembly, part of the 50S ribosomal subunit.

The polypeptide is Large ribosomal subunit protein uL30 (Mycobacterium ulcerans (strain Agy99)).